The sequence spans 165 residues: uncharacterized protein (165 aa).

The region spanning 1-165 (MDIKVVKGSI…EAWEKVLGLR (165 aa)) is the Macro domain.

This is an uncharacterized protein from Aquifex aeolicus (strain VF5).